Consider the following 182-residue polypeptide: NADH-quinone oxidoreductase subunit I (182 aa).

2 consecutive 4Fe-4S ferredoxin-type domains span residues 52-82 (LTRD…LQKA) and 92-121 (DFFR…LTPD). The [4Fe-4S] cluster site is built by Cys-62, Cys-65, Cys-68, Cys-72, Cys-101, Cys-104, Cys-107, and Cys-111.

It belongs to the complex I 23 kDa subunit family. NDH-1 is composed of 13 different subunits. Subunits NuoA, H, J, K, L, M, N constitute the membrane sector of the complex. It depends on [4Fe-4S] cluster as a cofactor.

It localises to the cell inner membrane. The enzyme catalyses a quinone + NADH + 5 H(+)(in) = a quinol + NAD(+) + 4 H(+)(out). NDH-1 shuttles electrons from NADH, via FMN and iron-sulfur (Fe-S) centers, to quinones in the respiratory chain. The immediate electron acceptor for the enzyme in this species is believed to be ubiquinone. Couples the redox reaction to proton translocation (for every two electrons transferred, four hydrogen ions are translocated across the cytoplasmic membrane), and thus conserves the redox energy in a proton gradient. In Pseudomonas savastanoi pv. phaseolicola (strain 1448A / Race 6) (Pseudomonas syringae pv. phaseolicola (strain 1448A / Race 6)), this protein is NADH-quinone oxidoreductase subunit I.